The following is a 239-amino-acid chain: MIVFILLSLAAVLQQFVADVNFESESPRRTEKQTEIVDMHNSFRRSVNPTARNMLKMEWYPEAADNAERWAYQCIYDHSANSERVIGGIQCGENIYKSSNPRAWTEIIQSWYDEIQNFEYGVGANPPGSVIGHYTQIVWYKSYRIGCAAAYCPSYPYNYFYVCQYCPTGNMEGLTATPYTSGPTCADCPSHCDDGLCTNPCPITNTFTNCDSLLQQNSCEDSYIKTNCGASCFCQDKII.

The first 18 residues, 1 to 18 (MIVFILLSLAAVLQQFVA), serve as a signal peptide directing secretion. Residues 37–165 (VDMHNSFRRS…PYNYFYVCQY (129 aa)) enclose the SCP domain. Cystine bridges form between C74-C152, C91-C166, C147-C163, C185-C192, C188-C197, C210-C228, and C219-C232. In terms of domain architecture, ShKT spans 201–234 (CPITNTFTNCDSLLQQNSCEDSYIKTNCGASCFC).

The protein belongs to the CRISP family. As to expression, expressed by the venom gland.

The protein resides in the secreted. In terms of biological role, blocks contraction of smooth muscle elicited by high potassium-induced depolarization, but does not block caffeine-stimulated contraction. May target voltage-gated calcium channels on smooth muscle. This Pseudoferania polylepis (Macleay's water snake) protein is Cysteine-rich venom protein ENH1.